We begin with the raw amino-acid sequence, 1154 residues long: MDVMNVPVDSERDNPGDKVETQSDKNHLPKASPSQSQSPVNTSLHNGDGKDNGVATEPVENKQILSERSVTRDDYEKGKTIVSSLALSSISGKDGSISSQNAEGLSSSSNRPLDVNDALSYLELVKYYFSERREIYNRFLEIMRDFKSQALDTLGVINRVSELFNGYPQLIEGFNTFLPSGYKIEVQLDSSNTSVVRVGTPMHPLPQQGVQSTLPVAPSNEDQRTMESTSPTDSQPQPSAPNLVSSTENEKPRVDFNYAIAYMNKVKARYPPNSDTYMEFLGVLRTYQKAQKSIFEVRARVAEIFKDSPDLLEEFKLFLPDNVDSTEPSTPNVQKSPNRLPPVGNFSLPPSAPVREKRNRPAHSAQISRSISKTSRMYRQTAEEPLNSYSLHVYPQKITAPTSPYAATQEELLAFTTIRQHLPDTLAFHKFLELLHLYREKLLDKTELLNSFSKLVRNDNLTLWFSEFIRWSDNPILVKNEPVDERVYLPETFECISLTYRKLPDSWKQDKCSGRDDLDNSVLNDDYISVAPKPSHVKNIMHHENQYLQALQLVEDERYDYDRVLNTTESAIKILANFCEPTIHEHLETALQELERSKRIIKNALIIVYGKEHANLALDTLFKKLPTAAPVLLKRIKTKDQEWRRSKREWSKIWRQIEKKNAQAAFDDRYCRIEGRDRRGLSYSRILRDIDDIYQRQKHRIDGAKLGFQFTQVLCDSLIFLNILRLSDAQLTNSSFYSYADKGRISAVLKALLSQFFGIPLPREALETNLASENIESVKKHRDGLSKIFIRPESADNSNNTNVSFQTDETQTEDETMSDIHPDDVENHSKSKFLGEESKNIIGYNFFGNATMYVLFRLICVCYSRLEHIKLFVESSTIYASSTGGYENILNICEKYLKGSCSRLEFRKYLQKFNNETCYMICSIERLLKVIFYRIHEILLDPKLGQLLLLFESDGANSVTTPREQMVYRNHVESILAPESKIFNMRWYPLEKRLCIQQLLPADLTMHDFENPAKAFMYYVDSYAISHITEGVDLMQVKMPFLRRSLQRISQQGYLAGRGSGRLHSLFNEHFCKSNLQLFFSTDTYVIFFEPNTENVYINSYNLWVDQSSQSKKQNRTTNWRRWLESDEGWRKSKANTDIKFFSETTLDQCIEAM.

Disordered regions lie at residues 1-71 (MDVM…RSVT) and 91-110 (SGKD…SSSN). Residues 9–27 (DSERDNPGDKVETQSDKNH) are compositionally biased toward basic and acidic residues. 2 stretches are compositionally biased toward polar residues: residues 32–45 (SPSQ…TSLH) and 100–110 (QNAEGLSSSSN). The region spanning 111-181 (RPLDVNDALS…EGFNTFLPSG (71 aa)) is the PAH 1 domain. Disordered stretches follow at residues 199 to 249 (GTPM…STEN) and 321 to 376 (DNVD…KTSR). Residues 228 to 241 (STSPTDSQPQPSAP) show a composition bias toward low complexity. The 71-residue stretch at 252–322 (PRVDFNYAIA…EEFKLFLPDN (71 aa)) folds into the PAH 2 domain. Composition is skewed to polar residues over residues 323 to 337 (VDST…QKSP) and 365 to 376 (AQISRSISKTSR). The PAH 3 domain occupies 403-472 (SPYAATQEEL…LWFSEFIRWS (70 aa)). The tract at residues 797–824 (NSNNTNVSFQTDETQTEDETMSDIHPDD) is disordered.

It localises to the nucleus. In Schizosaccharomyces pombe (strain 972 / ATCC 24843) (Fission yeast), this protein is Paired amphipathic helix protein pst3 (pst3).